We begin with the raw amino-acid sequence, 749 residues long: Transcription factor RFX3 (749 aa).

The RFX-type winged-helix DNA-binding region spans 183-258; sequence HLQWLLDNYE…YHYYGIRVKP (76 aa). Positions 663–699 are disordered; the sequence is VSPGNLDKDEGSEVESEMDEELDDSSEPQAKREKTEL. Over residues 674–688 the composition is skewed to acidic residues; that stretch reads SEVESEMDEELDDSS.

This sequence belongs to the RFX family. As to quaternary structure, heterodimer; heterodimerizes with RFX1 and RFX2, and RFX6.

The protein resides in the nucleus. In terms of biological role, transcription factor required for ciliogenesis and islet cell differentiation during endocrine pancreas development. Essential for the differentiation of nodal monocilia and left-right asymmetry specification during embryogenesis. Required for the biogenesis of motile cilia by governing growth and beating efficiency of motile cells. Also required for ciliated ependymal cell differentiation. Regulates the expression of genes involved in ciliary assembly (DYNC2LI1, FOXJ1 and BBS4) and genes involved in ciliary motility (DNAH11, DNAH9 and DNAH5). Together with RFX6, participates in the differentiation of 4 of the 5 islet cell types during endocrine pancreas development, with the exception of pancreatic PP (polypeptide-producing) cells. Regulates transcription by forming a heterodimer with another RFX protein and binding to the X-box in the promoter of target genes. Represses transcription of MAP1A in non-neuronal cells but not in neuronal cells. The protein is Transcription factor RFX3 (RFX3) of Homo sapiens (Human).